Reading from the N-terminus, the 193-residue chain is Pyridoxal 5'-phosphate synthase subunit PdxT (193 aa).

Residue 50-52 coordinates L-glutamine; it reads GES. The active-site Nucleophile is Cys-82. L-glutamine is bound by residues Arg-109 and 136-137; that span reads IR. Residues His-172 and Glu-174 each act as charge relay system in the active site.

The protein belongs to the glutaminase PdxT/SNO family. In the presence of PdxS, forms a dodecamer of heterodimers. Only shows activity in the heterodimer.

It carries out the reaction aldehydo-D-ribose 5-phosphate + D-glyceraldehyde 3-phosphate + L-glutamine = pyridoxal 5'-phosphate + L-glutamate + phosphate + 3 H2O + H(+). It catalyses the reaction L-glutamine + H2O = L-glutamate + NH4(+). Its pathway is cofactor biosynthesis; pyridoxal 5'-phosphate biosynthesis. Functionally, catalyzes the hydrolysis of glutamine to glutamate and ammonia as part of the biosynthesis of pyridoxal 5'-phosphate. The resulting ammonia molecule is channeled to the active site of PdxS. The protein is Pyridoxal 5'-phosphate synthase subunit PdxT of Streptococcus pneumoniae serotype 2 (strain D39 / NCTC 7466).